The sequence spans 735 residues: Catalase-peroxidase (735 aa).

A disordered region spans residues 1–25 (MSDSKCPVTGKSSRQVAGGGTSNRD). A cross-link (tryptophyl-tyrosyl-methioninium (Trp-Tyr) (with M-249)) is located at residues 95–223 (WHSAGTYRMG…LAAVQMGLIY (129 aa)). His-96 serves as the catalytic Proton acceptor. Residues 223–249 (YINPEGPDGNPDPVASGRDVRETFARM) constitute a cross-link (tryptophyl-tyrosyl-methioninium (Tyr-Met) (with W-95)). Heme b is bound at residue His-264.

Belongs to the peroxidase family. Peroxidase/catalase subfamily. Homodimer or homotetramer. It depends on heme b as a cofactor. Formation of the three residue Trp-Tyr-Met cross-link is important for the catalase, but not the peroxidase activity of the enzyme.

It catalyses the reaction H2O2 + AH2 = A + 2 H2O. The enzyme catalyses 2 H2O2 = O2 + 2 H2O. In terms of biological role, bifunctional enzyme with both catalase and broad-spectrum peroxidase activity. This Trichlorobacter lovleyi (strain ATCC BAA-1151 / DSM 17278 / SZ) (Geobacter lovleyi) protein is Catalase-peroxidase.